The primary structure comprises 539 residues: uncharacterized protein (539 aa).

2 ABC transporter domains span residues 8–265 and 307–537; these read VRIT…SRAL and IELD…IGDM. 339–346 is an ATP binding site; sequence GDNGSGKS.

The protein belongs to the ABC transporter superfamily.

The protein resides in the mitochondrion. This is an uncharacterized protein from Saccharomyces cerevisiae (strain ATCC 204508 / S288c) (Baker's yeast).